Consider the following 843-residue polypeptide: Protein P (843 aa).

Residues 1–177 (MPLSYQHFRR…FCGSPYSWEQ (177 aa)) are terminal protein domain (TP). Positions 178–346 (ELQHGSTSLN…YCLSHIINLL (169 aa)) are spacer. The interval 249-301 (TPTRWPSGVEPSGTGHSDNLATRSTSRFHQSEVRKETNPSLSTSKGHTSTGHA) is disordered. 2 stretches are compositionally biased toward polar residues: residues 262–276 (TGHS…TSRF) and 286–299 (NPSL…TSTG). Residues 347-690 (EDWGPCYEHG…YMNLYPVARQ (344 aa)) are polymerase/reverse transcriptase domain (RT). In terms of domain architecture, Reverse transcriptase spans 357–600 (EHHIRTPRTP…YSLHFMGYII (244 aa)). Residues aspartate 429, aspartate 551, and aspartate 552 each coordinate Mg(2+).

Belongs to the hepadnaviridae P protein family.

The catalysed reaction is DNA(n) + a 2'-deoxyribonucleoside 5'-triphosphate = DNA(n+1) + diphosphate. It catalyses the reaction Endonucleolytic cleavage to 5'-phosphomonoester.. Activated by host HSP70 and HSP40 in vitro to be able to bind the epsilon loop of the pgRNA. Because deletion of the RNase H region renders the protein partly chaperone-independent, the chaperones may be needed indirectly to relieve occlusion of the RNA-binding site by this domain. Inhibited by several reverse-transcriptase inhibitors: Lamivudine, Adefovir and Entecavir. In terms of biological role, multifunctional enzyme that converts the viral RNA genome into dsDNA in viral cytoplasmic capsids. This enzyme displays a DNA polymerase activity that can copy either DNA or RNA templates, and a ribonuclease H (RNase H) activity that cleaves the RNA strand of RNA-DNA heteroduplexes in a partially processive 3'- to 5'-endonucleasic mode. Neo-synthesized pregenomic RNA (pgRNA) are encapsidated together with the P protein, and reverse-transcribed inside the nucleocapsid. Initiation of reverse-transcription occurs first by binding the epsilon loop on the pgRNA genome, and is initiated by protein priming, thereby the 5'-end of (-)DNA is covalently linked to P protein. Partial (+)DNA is synthesized from the (-)DNA template and generates the relaxed circular DNA (RC-DNA) genome. After budding and infection, the RC-DNA migrates in the nucleus, and is converted into a plasmid-like covalently closed circular DNA (cccDNA). The activity of P protein does not seem to be necessary for cccDNA generation, and is presumably released from (+)DNA by host nuclear DNA repair machinery. This Homo sapiens (Human) protein is Protein P.